The following is a 179-amino-acid chain: Transcription factor 21 (179 aa).

Residues 20 to 86 form a disordered region; the sequence is CDGIKLDPNK…KQVQRNAANA (67 aa). Residues 34 to 46 show a composition bias toward polar residues; sequence SNDSNEESSTCDN. Residues 50–64 are compositionally biased toward basic residues; it reads KKGRGTSGKRRKASS. A compositionally biased stretch (polar residues) spans 70–80; sequence GTINQEGKQVQ. The 53-residue stretch at 79-131 folds into the bHLH domain; that stretch reads VQRNAANARERARMRVLSKAFSRLKTTLPWVPPDTKLSKLDTLRLASSYIAHL.

Efficient DNA binding requires dimerization with another bHLH protein. As to expression, at the start of neurulation (stage 13), expressed in the pronephros. At tailbud stage (stage 25-28), expression is high in the anterior-most branchial arch and pronephric glomus. At stage 40, staining persists in the glomus and in the epicardium region of the heart, and at stage 42, expression is higher in the glomus than in the kidney tubule or duct. In adults, expression is highest in the rectum and the spleen, with significant expression in the duodenum, heart, kidney, lungs, pancreas, skin, liver and muscle.

It localises to the nucleus. In terms of biological role, involved in epithelial-mesenchymal interactions in kidney and lung morphogenesis that include epithelial differentiation and branching morphogenesis. This is Transcription factor 21 (tcf21) from Xenopus laevis (African clawed frog).